Reading from the N-terminus, the 238-residue chain is Fatty acid metabolism regulator protein (238 aa).

The 69-residue stretch at 6–74 (KGPASFAEKY…HGKPTRVNNF (69 aa)) folds into the HTH gntR-type domain. The segment at residues 34–53 (ERELSELIGVTRTTLREVLQ) is a DNA-binding region (H-T-H motif).

In terms of assembly, homodimer.

Its subcellular location is the cytoplasm. In terms of biological role, multifunctional regulator of fatty acid metabolism. The polypeptide is Fatty acid metabolism regulator protein (Shewanella baltica (strain OS155 / ATCC BAA-1091)).